Here is a 101-residue protein sequence, read N- to C-terminus: Urease subunit gamma (101 aa).

The protein belongs to the urease gamma subunit family. Heterotrimer of UreA (gamma), UreB (beta) and UreC (alpha) subunits. Three heterotrimers associate to form the active enzyme.

It is found in the cytoplasm. It carries out the reaction urea + 2 H2O + H(+) = hydrogencarbonate + 2 NH4(+). The protein operates within nitrogen metabolism; urea degradation; CO(2) and NH(3) from urea (urease route): step 1/1. The protein is Urease subunit gamma of Ureaplasma parvum serovar 3 (strain ATCC 27815 / 27 / NCTC 11736).